The sequence spans 576 residues: Arginine--tRNA ligase (576 aa).

The 'HIGH' region motif lies at 126 to 136 (ANPTGPMHIGH).

Belongs to the class-I aminoacyl-tRNA synthetase family. Monomer.

The protein resides in the cytoplasm. The enzyme catalyses tRNA(Arg) + L-arginine + ATP = L-arginyl-tRNA(Arg) + AMP + diphosphate. The chain is Arginine--tRNA ligase from Rickettsia akari (strain Hartford).